The following is a 309-amino-acid chain: MSEINISAVAVKELREKTGAGMMDCKKALIETSGNFEEAIDFLRKKGLAAAAKKAGRIASEGLTAAKVDGLTGVVIEVNSETDFVARNEQFQDLVKDIANLAVIAKTIDTLKTFKMQSGKSVEEEIIENIATIGENLTLRRMDILEISEGAIGSYVHNEVVPNLGKISVLVGLASNAKDKAKLEALAKQIAVHVAGNNPQSIDDSSLDQALVERERKVFFEKSKEEGKPDNIIAKMVEGRIRKFFSEVVLLQQNFLFEPKLTVAEVIKNAEKELGAEIKIAKFIRYELGEGIEHEEKNFADEVAAITQG.

Positions 82-85 (TDFV) are involved in Mg(2+) ion dislocation from EF-Tu.

The protein belongs to the EF-Ts family.

The protein localises to the cytoplasm. Its function is as follows. Associates with the EF-Tu.GDP complex and induces the exchange of GDP to GTP. It remains bound to the aminoacyl-tRNA.EF-Tu.GTP complex up to the GTP hydrolysis stage on the ribosome. This chain is Elongation factor Ts, found in Rickettsia africae (strain ESF-5).